We begin with the raw amino-acid sequence, 267 residues long: Thymidylate synthase (267 aa).

DUMP is bound at residue arginine 24. Histidine 54 serves as a coordination point for (6R)-5,10-methylene-5,6,7,8-tetrahydrofolate. A dUMP-binding site is contributed by 129 to 130 (RR). The Nucleophile role is filled by cysteine 149. DUMP is bound by residues 169-172 (RSAD), asparagine 180, and 210-212 (HIY). Aspartate 172 is a (6R)-5,10-methylene-5,6,7,8-tetrahydrofolate binding site. Alanine 266 serves as a coordination point for (6R)-5,10-methylene-5,6,7,8-tetrahydrofolate.

Belongs to the thymidylate synthase family. Bacterial-type ThyA subfamily. Homodimer.

The protein localises to the cytoplasm. The catalysed reaction is dUMP + (6R)-5,10-methylene-5,6,7,8-tetrahydrofolate = 7,8-dihydrofolate + dTMP. The protein operates within pyrimidine metabolism; dTTP biosynthesis. Its function is as follows. Catalyzes the reductive methylation of 2'-deoxyuridine-5'-monophosphate (dUMP) to 2'-deoxythymidine-5'-monophosphate (dTMP) while utilizing 5,10-methylenetetrahydrofolate (mTHF) as the methyl donor and reductant in the reaction, yielding dihydrofolate (DHF) as a by-product. This enzymatic reaction provides an intracellular de novo source of dTMP, an essential precursor for DNA biosynthesis. The chain is Thymidylate synthase from Arthrobacter sp. (strain FB24).